A 395-amino-acid polypeptide reads, in one-letter code: Indoleacetate--lysine synthetase (395 aa).

The protein belongs to the ATP-dependent AMP-binding enzyme family.

It carries out the reaction (indol-3-yl)acetate + L-lysine + ATP = N(6)-[(indole-3-yl)acetyl]-L-lysine + ADP + phosphate + H(+). Its function is as follows. Conversion of IAA to IAA-lysine. The polypeptide is Indoleacetate--lysine synthetase (iaaL) (Pseudomonas savastanoi (Pseudomonas syringae pv. savastanoi)).